The chain runs to 206 residues: Glycerol-3-phosphate acyltransferase (206 aa).

5 helical membrane passes run 3 to 23 (LSLI…VIIG), 47 to 67 (VLGP…GTLA), 79 to 99 (HSLV…SIFL), 119 to 139 (PLFF…TSMV), and 152 to 172 (ILSF…VLIF).

The protein belongs to the PlsY family. In terms of assembly, probably interacts with PlsX.

It is found in the cell membrane. The enzyme catalyses an acyl phosphate + sn-glycerol 3-phosphate = a 1-acyl-sn-glycero-3-phosphate + phosphate. Its pathway is lipid metabolism; phospholipid metabolism. In terms of biological role, catalyzes the transfer of an acyl group from acyl-phosphate (acyl-PO(4)) to glycerol-3-phosphate (G3P) to form lysophosphatidic acid (LPA). This enzyme utilizes acyl-phosphate as fatty acyl donor, but not acyl-CoA or acyl-ACP. This is Glycerol-3-phosphate acyltransferase from Latilactobacillus sakei subsp. sakei (strain 23K) (Lactobacillus sakei subsp. sakei).